The chain runs to 416 residues: Methylthioribose-1-phosphate isomerase (416 aa).

D280 serves as the catalytic Proton donor.

This sequence belongs to the eIF-2B alpha/beta/delta subunits family. MtnA subfamily.

The protein resides in the cytoplasm. It localises to the nucleus. The enzyme catalyses 5-(methylsulfanyl)-alpha-D-ribose 1-phosphate = 5-(methylsulfanyl)-D-ribulose 1-phosphate. It participates in amino-acid biosynthesis; L-methionine biosynthesis via salvage pathway; L-methionine from S-methyl-5-thio-alpha-D-ribose 1-phosphate: step 1/6. Functionally, catalyzes the interconversion of methylthioribose-1-phosphate (MTR-1-P) into methylthioribulose-1-phosphate (MTRu-1-P). The protein is Methylthioribose-1-phosphate isomerase of Candida albicans (strain SC5314 / ATCC MYA-2876) (Yeast).